A 244-amino-acid polypeptide reads, in one-letter code: Cysteine-rich secretory protein 2 (244 aa).

Positions 1–21 (MALLPVVVFLITMLLPCVLTN) are cleaved as a signal peptide. The region spanning 43 to 170 (NKHNQLRKSV…SLKYYYVCQY (128 aa)) is the SCP domain. 5 disulfides stabilise this stretch: Cys-190–Cys-197, Cys-193–Cys-202, Cys-206–Cys-239, Cys-215–Cys-233, and Cys-224–Cys-237. One can recognise a ShKT domain in the interval 206-239 (CEYEDLLSNCESLKNTAGCEHQLLVEKCKATCRC).

It belongs to the CRISP family. In terms of assembly, interacts with NSUN4 isoform 3. Testis.

The protein resides in the secreted. Functionally, may regulate some ion channels' activity and thereby regulate calcium fluxes during sperm capacitation. In Cavia porcellus (Guinea pig), this protein is Cysteine-rich secretory protein 2 (CRISP2).